A 467-amino-acid polypeptide reads, in one-letter code: NADH-quinone oxidoreductase subunit N 2 (467 aa).

A run of 13 helical transmembrane segments spans residues 1–21, 31–51, 66–86, 99–119, 153–173, 195–215, 231–253, 258–280, 287–307, 315–335, 357–377, 394–414, and 434–454; these read MSIF…ALFV, VASW…FALG, LSQF…GIAA, FMLL…VELI, ILFG…IIAA, AVIG…LFPF, AAYV…AAFV, EVTT…AALV, LLGF…AAGS, AFYS…VCAI, LAMI…TAGF, WLVI…LSMV, and LIFG…PAPL.

Belongs to the complex I subunit 2 family. In terms of assembly, NDH-1 is composed of 14 different subunits. Subunits NuoA, H, J, K, L, M, N constitute the membrane sector of the complex.

It localises to the cell inner membrane. It carries out the reaction a quinone + NADH + 5 H(+)(in) = a quinol + NAD(+) + 4 H(+)(out). Its function is as follows. NDH-1 shuttles electrons from NADH, via FMN and iron-sulfur (Fe-S) centers, to quinones in the respiratory chain. The immediate electron acceptor for the enzyme in this species is believed to be ubiquinone. Couples the redox reaction to proton translocation (for every two electrons transferred, four hydrogen ions are translocated across the cytoplasmic membrane), and thus conserves the redox energy in a proton gradient. The sequence is that of NADH-quinone oxidoreductase subunit N 2 from Solidesulfovibrio magneticus (strain ATCC 700980 / DSM 13731 / RS-1) (Desulfovibrio magneticus).